The following is a 185-amino-acid chain: Elongation factor P (185 aa).

Belongs to the elongation factor P family.

It localises to the cytoplasm. It functions in the pathway protein biosynthesis; polypeptide chain elongation. Involved in peptide bond synthesis. Stimulates efficient translation and peptide-bond synthesis on native or reconstituted 70S ribosomes in vitro. Probably functions indirectly by altering the affinity of the ribosome for aminoacyl-tRNA, thus increasing their reactivity as acceptors for peptidyl transferase. The sequence is that of Elongation factor P from Salinispora tropica (strain ATCC BAA-916 / DSM 44818 / JCM 13857 / NBRC 105044 / CNB-440).